Consider the following 353-residue polypeptide: Aromatic amino acid aminotransferase (353 aa).

At lysine 217 the chain carries N6-(pyridoxal phosphate)lysine.

Belongs to the class-II pyridoxal-phosphate-dependent aminotransferase family. In terms of assembly, homodimer. It depends on pyridoxal 5'-phosphate as a cofactor.

It carries out the reaction an aromatic L-alpha-amino acid + 2-oxoglutarate = an aromatic oxo-acid + L-glutamate. Its function is as follows. Aminotransferase that catalyzes the conversion of aromatic amino acids and 2-oxoglutarate into corresponding aromatic oxo acids and L-glutamate. In Mycobacterium tuberculosis (strain ATCC 25177 / H37Ra), this protein is Aromatic amino acid aminotransferase.